A 254-amino-acid polypeptide reads, in one-letter code: Probable pectate lyase E (254 aa).

Positions 1 to 17 (MLQSLLLLPLFLTSAFA) are cleaved as a signal peptide. The N-linked (GlcNAc...) asparagine glycan is linked to N175. The disordered stretch occupies residues 228–254 (NNNGKEPKKKSSGPSKACEYNQPLKKC).

It belongs to the polysaccharide lyase 3 family. Requires Ca(2+) as cofactor.

The protein localises to the secreted. It carries out the reaction Eliminative cleavage of (1-&gt;4)-alpha-D-galacturonan to give oligosaccharides with 4-deoxy-alpha-D-galact-4-enuronosyl groups at their non-reducing ends.. Its function is as follows. Pectinolytic enzyme consist of four classes of enzymes: pectin lyase, polygalacturonase, pectin methylesterase and rhamnogalacturonase. Among pectinolytic enzymes, pectin lyase is the most important in depolymerization of pectin, since it cleaves internal glycosidic bonds of highly methylated pectins. Favors pectate, the anion, over pectin, the methyl ester. The sequence is that of Probable pectate lyase E (plyE) from Aspergillus clavatus (strain ATCC 1007 / CBS 513.65 / DSM 816 / NCTC 3887 / NRRL 1 / QM 1276 / 107).